The chain runs to 463 residues: MLYLILFLIAPIYAGLIFPTKPSSDPFYNPPKGFENAAVGDILQSRATPKSITGGFTPLKIQNSWQLLVRSEDSFGNPNVIVTTVIEPVNADPSKIASYQVFEDAAKADCAPSYALQFGSDLTTFVTQAEMYLMAPLLDQGYYVVSPDYEGPKSTFTIGKQSGQAVLNSIRAALKSGKITNIKDDAKVVMWGYSGGSLASGWAAALQPSYAPELGGNLLGAALGGFVTNITATAQATDGTVFAGIVANALGGVANEYPEFKSILQSDTDKKSVFDEFDGHCLIDGVLNYIGTSFLTGDHKIFKTGWDILKNPKIGKVVEDNGLVYQKQLVPKIPVFIYHGSIDQIVPIVDTKKTYQNWCDAGISSLEFAEDASNGHLTEAIMGAPAALTWIIDRFDGKQTVSGCQHIQRFSNLEYPNIPSSIANYFKAAMDVVLHLGLGPDVQKDQVSPEGIKKLGSIEMRWL.

Positions 1–14 (MLYLILFLIAPIYA) are cleaved as a signal peptide. C110 and C281 are disulfide-bonded. S194 acts as the Charge relay system in catalysis. N229 carries N-linked (GlcNAc...) asparagine glycosylation. Active-site charge relay system residues include D343 and H376. Residues C359 and C404 are joined by a disulfide bond.

Belongs to the AB hydrolase superfamily. Lipase family. Class Lip subfamily.

It is found in the secreted. It catalyses the reaction a triacylglycerol + H2O = a diacylglycerol + a fatty acid + H(+). Its activity is regulated as follows. Fe(2)+, Fe(3+), Hg(2+) as well as ethylenediaminetetraacetic acid (EDTA) and phenylmethanesulfonyl fluoride (PMSF) strongly inhibit the lipase activity. Surfactants such as Tween 20, Tween 80 and TritonX-100 show also inhibitory effect in the lipase activity. Sodium dodecyl sulfate (SDS) sharply decreases the lipase activity by 85%. Methanol, ethanol, and acetone have also negative effect on the lipase activity, with residual activities at 48%, 24% and 44% respectively. Finally, lipase activity is almost lost in the presence of isopropanol alcohol. Its function is as follows. Secreted lipase that is able to hydrolyze both the neutral triacylglycerols and the monopalmitate ester Tween 40, allowing the use of hydrolyzed products as carbon sources. Exhibits a preference for the short and medium chain length p-NP (C4 and C8 acyl group) esters rather than the long chain length p-NP esters (C12, C16 and C18 acyl group). Has broad lipolytic activity, which may be important for colonization and subsequent infection, therefore contributing to the persistence and virulence in human tissue. The polypeptide is Lipase 5 (Candida albicans (strain SC5314 / ATCC MYA-2876) (Yeast)).